Here is a 475-residue protein sequence, read N- to C-terminus: Retrotransposon Gag-like protein 3 (475 aa).

Composition is skewed to basic and acidic residues over residues 51–66 (LLRK…KLPE) and 78–87 (KTPEFKEPQK). Disordered stretches follow at residues 51–101 (LLRK…EPPA), 152–173 (EPKN…APEY), and 397–421 (DPNP…ENQP). Residues 443–462 (RLCLYCGYPGHFARDCPVKP) form a CCHC-type zinc finger.

The protein localises to the nucleus. Its function is as follows. May function as a transcriptional regulator. Plays a role in postnatal myogenesis, may be involved in the regulation of satellite cells self-renewal. The sequence is that of Retrotransposon Gag-like protein 3 from Homo sapiens (Human).